Here is a 318-residue protein sequence, read N- to C-terminus: MLFLNIIKLLLGLFIMNEVKAQNFYDSDPHISELTPKSFDKAIHNTNYTSLVEFYAPWCGHCKKLSSTFRKAAKRLDGVVQVAAVNCDLNKNKALCAKYDVNGFPTLMVFRPPKIDLSKPIDNAKKSFSAHANEVYSGARTLAPIVDFSLSRIRSYVKKFVRIDTLGSLLRKSPKLSVVLFSKQDKISPVYKSIALDWLGKFDFYSISNKKLKQLTDMNPTYEKTPEIFKYLQKVIPEQRQSDKSKLVVFDADKDKFWEYEGNSINKNDISKFLRDTFSITPNEGPFSRRSEYIAYLKTGKKPIKKNHSSSGNKHDEL.

The signal sequence occupies residues 1 to 21 (MLFLNIIKLLLGLFIMNEVKA). One can recognise a Thioredoxin domain in the interval 22-158 (QNFYDSDPHI…SLSRIRSYVK (137 aa)). Asn-47 is a glycosylation site (N-linked (GlcNAc...) asparagine). The cysteines at positions 59 and 62 are disulfide-linked. Asn-307 carries an N-linked (GlcNAc...) asparagine glycan. Residues 315-318 (HDEL) carry the Prevents secretion from ER motif.

This sequence belongs to the protein disulfide isomerase family. Interacts with CNE1 and EPS1.

The protein localises to the endoplasmic reticulum lumen. It catalyses the reaction Catalyzes the rearrangement of -S-S- bonds in proteins.. In terms of biological role, participates in the folding of proteins containing disulfide bonds. This Saccharomyces cerevisiae (strain ATCC 204508 / S288c) (Baker's yeast) protein is Protein disulfide-isomerase MPD1 (MPD1).